Reading from the N-terminus, the 519-residue chain is Exodeoxyribonuclease 7 large subunit (519 aa).

Residues 500-519 form a disordered region; it reads VGRGKTRKPKEEPPAQGSLL.

It belongs to the XseA family. As to quaternary structure, heterooligomer composed of large and small subunits.

It localises to the cytoplasm. The catalysed reaction is Exonucleolytic cleavage in either 5'- to 3'- or 3'- to 5'-direction to yield nucleoside 5'-phosphates.. Functionally, bidirectionally degrades single-stranded DNA into large acid-insoluble oligonucleotides, which are then degraded further into small acid-soluble oligonucleotides. In Cereibacter sphaeroides (strain KD131 / KCTC 12085) (Rhodobacter sphaeroides), this protein is Exodeoxyribonuclease 7 large subunit.